Here is a 644-residue protein sequence, read N- to C-terminus: Core protein VP4 (644 aa).

The protein belongs to the orbivirus VP4 family.

It is found in the virion. In terms of biological role, the VP4 protein is one of the five proteins (with VP1, VP3, VP6 and VP7) which form the inner capsid of the virus. This Bluetongue virus 11 (isolate USA) (BTV 11) protein is Core protein VP4 (Segment-4).